A 2225-amino-acid chain; its full sequence is MDSTQITESNRECSVLQGKLATETVRESLSSSPSPLPSLASPVSSGSEPPAFGETQPQSRDSTLLFNAQVPEFWETCVHDVIQERCKEAPQSTAVAAWDGSFTYGELDDLSNRLASALTLLGVKAETFVPICMEKSRWATVAVLGVMKAGGAFTLLDASYPLPRLKTICQELSSLVVLSSTAQSERCTQLANMIVVEHLCRAWHPVAHTTQSPATVCPSNALYVSFTSGSTGRPKGVLIEHRAYSSGAREHLKAFRIDQTSRVLQFSSYAFDVSIMETLSTLMAGGCLCVLGDAQRSDVCLFAAAVDEFQVSHALLTPSFARTVPWENVRHLQTLVLGGEEMRVSDAAMCVERGVRLINAYGTAECSVNATARPGVQPGDNLSTIGHPTGAVAWLIDPDDPETPIGPGMEGELLLEGPIVGRGYLNNPAATAAAFIGPPKWLQQLRKTDYQHQLYRTGDLAVQDSTGALMLLGRRDGQLKIRGQRVEVAEIEQHIDRVLAAVKEVIVEKVTPECEQREILMAFVQTGATSQAWTEGSPLFLPPGPTSVQEFRTAQSQLRGQLPSYMVPTIFIGVAAVPRTASGKMDRRLLRVTAGRLSREELQAFTGSPVDSRSPTTATELMLQRLYAEVLELPTTSISMEDSFVRLGGDSIMAVRLLGAARRAGLVLDIGDVLGTARLEEQAQRATPMTEGTACETYIPFSALGSRYMNREEVLRLAAEQCGTSLSEIEDIYPCTPLQEGMLALASSQTWMYVGHIVFGLPEGVDVSRFKAAWQSTADTTPILRTRIIETPQGLLQVVLRGSLVWETYNEPPDACVADGGSQIGSPGAPLMRFALGDGDHRDEFVLTVHHAVWDAWSMRLIHDAVERSFQGEQVKKQPFHPFIQHLQQVDGGMDEFWRTELANLEAVPFPALPSTHYRPSPTAMLRHTVEKIEICAPRSHTMASYIHLAWSLLVAHYTDSTEAVYGATMSGRNAPVEAINELAGPTIATVPVRVHVRPEDTISAALEQIQSCMVRMVPHEQAGLLRIAKTSSDAARACAFQSHLNIQVVEPERRLFPVRRGIASTGMDLTRFSSYALNLMLLLSPDNTSVIVNIAYDPQVLSAWEVYRMIHQWEHILRQVCREPTGSLQELDLASPLDQDLLRVWNAKTPAVDRRCLHDLVLAQAMQQPSRQAVSAWDGGFTYGELAHLSSNFARLLSLFAVGRGSFVPICMDKSRWAVVSILAVLQAGATCVLLDPQYPRQRMKDIITGLSVPVLVNAPSTAPVTRGLSAIQLCVSAKFTEQLWTSNPSGSHFQAHVDPDDLAFVIFTSGSTGAPKGIAMPHSTISSSIRHNSAAMRFDADTRTLHFSSYAFDVSIYEIFTTLASGGCVCVPSEFQRTNELADFIQQWRVNWAFLTPSTAQSLHPSEVPGLATLVLGGEAVTPDHVEVWAPGRTLINGYGPAEATICAVGPLPEHGWVPGKIGHVVGGVGWVTVPSDPNRLAAIGAIGELLLEGPFLARGYLNQHEATAASFITPPPWRRKLLPGCDADTTRLYRTGDLVRYQEDGSLRYIGRRDTQVKVRGQRIDLGEIETQLHRSFPGAHDVVAETVQLPVLQDRTVLVAFIGRQEGLVMESALGEEVVAAVDAGFQQAVSSAQARLQDILPSYMLPSVFLPLAHCPKTLTGKTDRRYLRQVVLGLEPHELQRYRVASRQKTRIPVSHGAELRLQSIWADLLHIPCDEIGAEDTFLLHGGDSVAAMRMVALARRADFTFRVTDVLNNCTLSDLARCTGEEQCLAAETLPTVHDVESDDQVVASQTDSDAIAVYPTTQAQSFLIQRYPWTHWRFAFHGEVSIDRLRTACARLVAAHSILRTLFVGGKGQRDRQVVMKALDIPLHTVTTNKSLEEYCQSICDAEQQMDVVETVLPTRLTLVSDVLHTAHIFVLRLSHAQYDGICVPKIFAGLESFYNRTETVAPTIFERYLDQRQRFEGEGPHEFWRAYLAGSSPPCTMPGKSTPPTTADSGPVAPPSVISASQTVKFTAIPSQVTLATVVKAAACLVLARLTGRSDITVGQTVNGRSLPLPWVNEVVGPCVNYIPFRATLQQSMSTQDYLVDMQRQHNRCVPFDGAELDTIVKNCTDWEPTAEFGFILQHQNIDMDLSLTLDGNRCVSCASSGQLRPSNEVWICSTPSPSGVDLDVVASSHILTADAAKNLVDDIADMIQTLLYNLETPLRDAVELNWSDGS.

Positions 24–59 (TVRESLSSSPSPLPSLASPVSSGSEPPAFGETQPQS) are disordered. Low complexity predominate over residues 28 to 49 (SLSSSPSPLPSLASPVSSGSEP). The interval 83 to 482 (QERCKEAPQS…GRRDGQLKIR (400 aa)) is adenylation 1. Positions 614–690 (SPTTATELML…EQAQRATPMT (77 aa)) constitute a Carrier 1 domain. Position 651 is an O-(pantetheine 4'-phosphoryl)serine (Ser651). The tract at residues 730-1142 (EDIYPCTPLQ…DLASPLDQDL (413 aa)) is condensation 1. Positions 1164–1563 (AQAMQQPSRQ…GRRDTQVKVR (400 aa)) are adenylation 2. One can recognise a Carrier 2 domain in the interval 1699-1775 (PVSHGAELRL…DLARCTGEEQ (77 aa)). The residue at position 1736 (Ser1736) is an O-(pantetheine 4'-phosphoryl)serine. The interval 1827-2138 (FAFHGEVSID…FILQHQNIDM (312 aa)) is condensation 2.

Belongs to the NRP synthetase family.

It catalyses the reaction L-proline + L-tryptophan + 2 ATP = brevianamide F + 2 AMP + 2 diphosphate + 2 H(+). Its pathway is alkaloid biosynthesis. Functionally, nonribisomal peptide synthetase; part of the gene cluster that mediates the biosynthesis of notoamide, a fungal indole alkaloid that belongs to a family of natural products containing a characteristic bicyclo[2.2.2]diazaoctane core. The first step of notoamide biosynthesis involves coupling of L-proline and L-tryptophan by the bimodular NRPS notE', to produce cyclo-L-tryptophan-L-proline called brevianamide F. The reverse prenyltransferase notF' then acts as a deoxybrevianamide E synthase and converts brevianamide F to deoxybrevianamide E via reverse prenylation at C-2 of the indole ring leading to the bicyclo[2.2.2]diazaoctane core. Deoxybrevianamide E is further hydroxylated at C-6 of the indole ring, likely catalyzed by the cytochrome P450 monooxygenase notG', to yield 6-hydroxy-deoxybrevianamide E. 6-hydroxy-deoxybrevianamide E is a specific substrate of the prenyltransferase notC' for normal prenylation at C-7 to produce 6-hydroxy-7-prenyl-deoxybrevianamide, also called notoamide S. As the proposed pivotal branching point in notoamide biosynthesis, notoamide S can be diverted to notoamide E through an oxidative pyran ring closure putatively catalyzed by either notH' cytochrome P450 monooxygenase or the notD' FAD-linked oxidoreductase. This step would be followed by an indole 2,3-epoxidation-initiated pinacol-like rearrangement catalyzed by the notB' FAD-dependent monooxygenase leading to the formation of notoamide C and notoamide D. On the other hand notoamide S is converted to notoamide T by notH' (or notD'), a bifunctional oxidase that also functions as the intramolecular Diels-Alderase responsible for generation of (-)-notoamide T. To generate antipodal (+)-notoaminide T, notH (or notD) in Aspergillus strain MF297-2 is expected to catalyze a Diels-Alder reaction leading to the opposite stereochemistry. The remaining oxidoreductase notD' (or notH') likely catalyzes the oxidative pyran ring formation to yield (-)-stephacidin A. The FAD-dependent monooxygenase notI' is highly similar to notB' and is predicted to catalyze a similar conversion from (-)-stephacidin A to (+)-notoamide B via the 2,3-epoxidation of (-)-stephacidin A followed by a pinacol-type rearrangement. Finally, it remains unclear which enzyme could be responsible for the final hydroxylation steps leading to notoamide A and sclerotiamide. The polypeptide is Nonribisomal peptide synthetase notE' (Aspergillus versicolor).